A 1389-amino-acid polypeptide reads, in one-letter code: uncharacterized protein (1389 aa).

Residues 43–94 adopt a coiled-coil conformation; the sequence is STIAQRVSQLENEVAEINVALAEHVNELNSQEKRIDKLEKTVKKKKSNCSDD. The segment at 294 to 353 is disordered; sequence HKNRRSKSDNSDLSEYSSSNSDDSECTDSDGSSCSTDGSPDCTESENTESHRSHGKKKHR. Composition is skewed to low complexity over residues 304-314 and 322-335; these read SDLSEYSSSNS and SDGSSCSTDGSPDC. 3 WD repeats span residues 867–907, 1017–1056, and 1115–1156; these read TFTD…VKHI, GYNEGLDIKYSPDQTIVVSGYYNTNPLIIYDGPDGLTPSG, and GISN…ILST.

It localises to the virion. This is an uncharacterized protein from Acanthamoeba polyphaga (Amoeba).